Consider the following 440-residue polypeptide: Thymidine phosphorylase (440 aa).

Belongs to the thymidine/pyrimidine-nucleoside phosphorylase family. As to quaternary structure, homodimer.

It catalyses the reaction thymidine + phosphate = 2-deoxy-alpha-D-ribose 1-phosphate + thymine. Its pathway is pyrimidine metabolism; dTMP biosynthesis via salvage pathway; dTMP from thymine: step 1/2. Its function is as follows. The enzymes which catalyze the reversible phosphorolysis of pyrimidine nucleosides are involved in the degradation of these compounds and in their utilization as carbon and energy sources, or in the rescue of pyrimidine bases for nucleotide synthesis. The protein is Thymidine phosphorylase of Escherichia coli (strain 55989 / EAEC).